Reading from the N-terminus, the 619-residue chain is Guanylate cyclase soluble subunit beta-1 (619 aa).

His-105 lines the heme pocket. In terms of domain architecture, Guanylate cyclase spans 421–554; it reads TILFSGIVGF…NTVNLTSRTE (134 aa).

Belongs to the adenylyl cyclase class-4/guanylyl cyclase family. The active enzyme is formed by a heterodimer of an alpha and a beta subunit. Heterodimer with GUCY1A1. Can also form inactive homodimers in vitro. It depends on heme as a cofactor. Detected in brain cortex and cerebellum (at protein level).

Its subcellular location is the cytoplasm. It carries out the reaction GTP = 3',5'-cyclic GMP + diphosphate. With respect to regulation, activated by nitric oxide in the presence of magnesium or manganese ions. Its function is as follows. Mediates responses to nitric oxide (NO) by catalyzing the biosynthesis of the signaling molecule cGMP. The chain is Guanylate cyclase soluble subunit beta-1 from Homo sapiens (Human).